Here is a 507-residue protein sequence, read N- to C-terminus: ATP-dependent RNA helicase DDX47 (507 aa).

Acidic residues predominate over residues 1–31 (MSETSEDEQTQLQTSDEEEDLGSEEEQEDED). The tract at residues 1 to 58 (MSETSEDEQTQLQTSDEEEDLGSEEEQEDEDNNHKEGDSEAALSGEDDKGSEDDAAEE) is disordered. The Q motif motif lies at 61–89 (LTWKDLGLNEALCQACDELKWKAPSKIQR). Residues 92–263 (IPVALQGKDV…RASLKDPVKV (172 aa)) form the Helicase ATP-binding domain. ATP is bound at residue 105-112 (AETGSGKT). The short motif at 211–214 (DEAD) is the DEAD box element. Positions 290–434 (YLVHILNELA…LYKCEEDEVM (145 aa)) constitute a Helicase C-terminal domain. The stretch at 426-453 (YKCEEDEVMALQERVAEAQRTAKLELKD) forms a coiled coil. The span at 451-471 (LKDLEDTRGGHKRGGDTHDDS) shows a compositional bias: basic and acidic residues. The disordered stretch occupies residues 451 to 507 (LKDLEDTRGGHKRGGDTHDDSENFTGARKRMKPMGGTGGGGRKSFGKKNWSKGKQKR). The segment covering 494 to 507 (SFGKKNWSKGKQKR) has biased composition (basic residues).

Belongs to the DEAD box helicase family. DDX47/RRP3 subfamily.

Its subcellular location is the nucleus. It localises to the nucleolus. It carries out the reaction ATP + H2O = ADP + phosphate + H(+). Functionally, part of a translational control module, also containing ath/DHX33 and ais/DDX52, which coordinates germline stem cell differentiation with ribosome biogenesis during oogenesis. This module allows for coregulation of ribosomal proteins and non1/GTPBP4, a p53 repressor, preventing p53 stabilization, cell cycle arrest and loss of stem cell differentiation. With atos, adjusts transcription and translation of a subset of OXPHOS genes in macrophages to increase mitochondrial bioenergetics and allow tissue invasion. This chain is ATP-dependent RNA helicase DDX47, found in Drosophila melanogaster (Fruit fly).